Reading from the N-terminus, the 257-residue chain is MSSELNIPVDPSTPAVSERGNKGMDYRDWVRRSYLELVTSNHHSVQALSWRKLYLSRAKLKASSRTSALLSGFAMVAMVEVQLEMKYGYPQLLLIAFSACTTVLVAVHLFALLISTCILPNVEAVSNIHNLNSVNESPHDRMHPYIELAWGFSTALGILLFLAEVVLLCWIKFLPIDSALTRNETATTQKPRGNAGWNSALVSTIIMVPVGIIFVIFTIHFYRTLVRHKTERHHQEIEELHKLKVQLDGHDRGINVV.

A run of 4 helical transmembrane segments spans residues alanine 62 to valine 79, leucine 94 to isoleucine 114, leucine 156 to isoleucine 176, and leucine 201 to phenylalanine 221.

The protein belongs to the Orai family.

The protein localises to the membrane. In terms of biological role, ca(2+) release-activated Ca(2+)-like (CRAC-like) channel subunit which mediates Ca(2+) influx and increase in Ca(2+)-selective current by synergy with the Ca(2+) sensor, stim1. The chain is Protein orai-2 (orai2) from Xenopus laevis (African clawed frog).